We begin with the raw amino-acid sequence, 289 residues long: MAMAMANHHTLGLIFGILGNIISFLVYFAPAPTFYRIYKRKSAEGFHSLPYIVALFSAMLWLYYALLKKDAFLLITINSFGCAIESFYILLYFFYAPMQAKKQTLKVVISLNVGVFSILVVLIQFLLKGSNRINVFGWICASFSVAVFAAPLSIVAKVIRTKSVEFMPFSLSFFLTLSAIMWFAYGLLKNDPCVAIPNILGVILGLVQMVLYGFYRNAGKEKMEKKLPEHIIDMVMLSTLGTSDIHPIGAQQNGIKKSGSEDVKDDEETGNREKSTENSGELQPNGSTV.

Residues 1–10 (MAMAMANHHT) are Extracellular-facing. The helical transmembrane segment at 11-31 (LGLIFGILGNIISFLVYFAPA) threads the bilayer. A MtN3/slv 1 domain is found at 14-100 (IFGILGNIIS…LYFFYAPMQA (87 aa)). Over 32 to 45 (PTFYRIYKRKSAEG) the chain is Cytoplasmic. A helical membrane pass occupies residues 46 to 66 (FHSLPYIVALFSAMLWLYYAL). Over 67-70 (LKKD) the chain is Extracellular. Residues 71–91 (AFLLITINSFGCAIESFYILL) traverse the membrane as a helical segment. Residues 92–106 (YFFYAPMQAKKQTLK) lie on the Cytoplasmic side of the membrane. A helical transmembrane segment spans residues 107-127 (VVISLNVGVFSILVVLIQFLL). Residues 128–134 (KGSNRIN) lie on the Extracellular side of the membrane. Residues 135–155 (VFGWICASFSVAVFAAPLSIV) traverse the membrane as a helical segment. One can recognise a MtN3/slv 2 domain in the interval 136-219 (FGWICASFSV…VLYGFYRNAG (84 aa)). Over 156–167 (AKVIRTKSVEFM) the chain is Cytoplasmic. Residues 168–188 (PFSLSFFLTLSAIMWFAYGLL) form a helical membrane-spanning segment. Residues 189–193 (KNDPC) lie on the Extracellular side of the membrane. Residues 194–214 (VAIPNILGVILGLVQMVLYGF) form a helical membrane-spanning segment. Residues 215 to 289 (YRNAGKEKME…GELQPNGSTV (75 aa)) lie on the Cytoplasmic side of the membrane. Residues 249-289 (GAQQNGIKKSGSEDVKDDEETGNREKSTENSGELQPNGSTV) form a disordered region. Residues 277 to 289 (ENSGELQPNGSTV) are compositionally biased toward polar residues.

This sequence belongs to the SWEET sugar transporter family. In terms of assembly, forms homooligomers and/or heterooligomers.

It is found in the cell membrane. Mediates both low-affinity uptake and efflux of sugar across the plasma membrane. The protein is Bidirectional sugar transporter SWEET15 of Vitis vinifera (Grape).